Reading from the N-terminus, the 107-residue chain is High mobility group protein HMG-I/HMG-Y (107 aa).

Residues 1–13 show a composition bias toward polar residues; the sequence is MSESGSKSSQPLA. The interval 1–107 is disordered; that stretch reads MSESGSKSSQ…ISQESSEEEQ (107 aa). An N-acetylserine modification is found at Ser2. Lys7 is subject to N6-acetyllysine. Residue Ser8 is modified to ADP-ribosylserine. Ser9 bears the ADP-ribosylserine; alternate mark. At Ser9 the chain carries Phosphoserine; alternate. Position 15 is an N6-acetyllysine; alternate (Lys15). A Glycyl lysine isopeptide (Lys-Gly) (interchain with G-Cter in SUMO2); alternate cross-link involves residue Lys15. Residues 15 to 24 are compositionally biased toward basic and acidic residues; it reads KQEKDGTEKR. A DNA-binding region (a.T hook 1) is located at residues 21–31; sequence TEKRGRGRPRK. An Asymmetric dimethylarginine; alternate modification is found at Arg26. The residue at position 26 (Arg26) is an Omega-N-methylarginine; alternate. Arg26 bears the Symmetric dimethylarginine; alternate mark. The residue at position 36 (Ser36) is a Phosphoserine; by HIPK2 and CDC2. Thr39 is subject to Phosphothreonine. Ser44 and Ser49 each carry phosphoserine. Thr53 carries the post-translational modification Phosphothreonine; by HIPK2 and CDC2. 2 DNA-binding regions (a.T hook) span residues 53–63 and 78–89; these read TPKRPRGRPKG and APGRKPRGRPKK. Residues 53–77 form an interaction with HIPK2 region; sequence TPKRPRGRPKGSKNKGAAKTRKVTT. A compositionally biased stretch (basic residues) spans 55–74; the sequence is KRPRGRPKGSKNKGAAKTRK. Arg58 and Arg60 each carry asymmetric dimethylarginine; by PRMT6; alternate. Omega-N-methylarginine; by PRMT6; alternate is present on residues Arg58 and Arg60. Residues 93 to 107 show a composition bias toward acidic residues; that stretch reads EEEEGISQESSEEEQ. 3 positions are modified to phosphoserine: Ser99, Ser102, and Ser103.

The protein belongs to the HMGA family. In terms of assembly, interacts with HIPK2. Post-translationally, isoforms HMG-I and HMG-Y can be phosphorylated by HIPK2. Phosphorylation may modulate DNA-binding affinity. In terms of processing, methylation at Arg-58 is mutually exclusive with methylation at Arg-60.

The protein localises to the nucleus. It localises to the chromosome. Functionally, HMG-I/Y bind preferentially to the minor groove of A+T rich regions in double-stranded DNA. It is suggested that these proteins could function in nucleosome phasing and in the 3'-end processing of mRNA transcripts. They are also involved in the transcription regulation of genes containing, or in close proximity to A+T-rich regions. This chain is High mobility group protein HMG-I/HMG-Y (Hmga1), found in Mus musculus (Mouse).